We begin with the raw amino-acid sequence, 670 residues long: UvrABC system protein B (670 aa).

The Helicase ATP-binding domain maps to 51–433 (EGLKKREQFQ…SARIVEQIIR (383 aa)). 64–71 (GVTGSGKT) contacts ATP. Residues 117–140 (YYDYYQPESYLPAKDQYIEKDAQI) carry the Beta-hairpin motif. Residues 453–612 (DVMQEIRKIV…IVPKTIRKPI (160 aa)) enclose the Helicase C-terminal domain. The region spanning 631–666 (PNVIIELDAEMREAADRLDFERAIQLRELIKKLEKE) is the UVR domain.

This sequence belongs to the UvrB family. Forms a heterotetramer with UvrA during the search for lesions. Interacts with UvrC in an incision complex.

The protein resides in the cytoplasm. Its function is as follows. The UvrABC repair system catalyzes the recognition and processing of DNA lesions. A damage recognition complex composed of 2 UvrA and 2 UvrB subunits scans DNA for abnormalities. Upon binding of the UvrA(2)B(2) complex to a putative damaged site, the DNA wraps around one UvrB monomer. DNA wrap is dependent on ATP binding by UvrB and probably causes local melting of the DNA helix, facilitating insertion of UvrB beta-hairpin between the DNA strands. Then UvrB probes one DNA strand for the presence of a lesion. If a lesion is found the UvrA subunits dissociate and the UvrB-DNA preincision complex is formed. This complex is subsequently bound by UvrC and the second UvrB is released. If no lesion is found, the DNA wraps around the other UvrB subunit that will check the other stand for damage. The chain is UvrABC system protein B from Methanosarcina acetivorans (strain ATCC 35395 / DSM 2834 / JCM 12185 / C2A).